A 169-amino-acid polypeptide reads, in one-letter code: S-ribosylhomocysteine lyase (169 aa).

Fe cation-binding residues include H54, H58, and C128.

It belongs to the LuxS family. In terms of assembly, homodimer. Fe cation serves as cofactor.

The enzyme catalyses S-(5-deoxy-D-ribos-5-yl)-L-homocysteine = (S)-4,5-dihydroxypentane-2,3-dione + L-homocysteine. Involved in the synthesis of autoinducer 2 (AI-2) which is secreted by bacteria and is used to communicate both the cell density and the metabolic potential of the environment. The regulation of gene expression in response to changes in cell density is called quorum sensing. Catalyzes the transformation of S-ribosylhomocysteine (RHC) to homocysteine (HC) and 4,5-dihydroxy-2,3-pentadione (DPD). The sequence is that of S-ribosylhomocysteine lyase from Shewanella woodyi (strain ATCC 51908 / MS32).